Consider the following 284-residue polypeptide: Tropomyosin (284 aa).

The stretch at 1-284 (MDAIKKKMLA…DQTFAELAGY (284 aa)) forms a coiled coil. Residues 202–213 (NNTKSLEISEQE) show a composition bias toward polar residues. The disordered stretch occupies residues 202–223 (NNTKSLEISEQEASQREDSYEE). Residues 214-223 (ASQREDSYEE) show a composition bias toward basic and acidic residues.

The protein belongs to the tropomyosin family. Homodimer.

Its function is as follows. Tropomyosin, in association with the troponin complex, plays a central role in the calcium dependent regulation of muscle contraction. This chain is Tropomyosin, found in Haliotis rufescens (California red abalone).